The primary structure comprises 541 residues: Amino-acid permease 2 (541 aa).

The segment covering 1–22 (MSFSPPNKSADATIQITEMTRQ) has biased composition (polar residues). Residues 1–43 (MSFSPPNKSADATIQITEMTRQGTPSSGEAAASTPSTSSTESG) form a disordered region. Positions 23–41 (GTPSSGEAAASTPSTSSTE) are enriched in low complexity. The next 12 membrane-spanning stretches (helical) occupy residues 66-86 (FSFAMSISGVYGTLMSTWIYG), 90-110 (GGAAAIMWSWIIGGAGGWALA), 139-159 (VPFLCWIAGYLNLVGTVAGGA), 188-208 (VVGVMIGLTTIHAMINTLPTA), 214-234 (TSGYVVFHISVLLGACVTLLV), 255-275 (GWSPPGFAFLFGCLTPAWIMT), 301-321 (ATTFTYVIGFFFNLVLVVCMG), 347-367 (PAIFFTLCGFGVMNLVAIPGI), 399-419 (PLIAVWTYAVLEIIINLLGLA), 424-444 (IGAVFNVCTVALNVSYVIPII), 464-484 (VWVNAFAVAWNTFMAVIFFFP), and 496-516 (YAIVVFFFVLIFALVFWYTHG).

This sequence belongs to the amino acid-polyamine-organocation (APC) superfamily.

The protein localises to the membrane. In Neurospora crassa (strain ATCC 24698 / 74-OR23-1A / CBS 708.71 / DSM 1257 / FGSC 987), this protein is Amino-acid permease 2 (aap-2).